A 404-amino-acid chain; its full sequence is S-adenosylmethionine synthase (404 aa).

Histidine 17 provides a ligand contact to ATP. Aspartate 19 provides a ligand contact to Mg(2+). Glutamate 45 provides a ligand contact to K(+). L-methionine is bound by residues glutamate 58 and glutamine 101. The tract at residues 101 to 111 is flexible loop; that stretch reads QSADINRGVDR. ATP is bound by residues 172-174, 245-246, aspartate 254, 260-261, alanine 277, and lysine 281; these read DAK, RF, and RK. Residue aspartate 254 participates in L-methionine binding. Lysine 285 lines the L-methionine pocket.

Belongs to the AdoMet synthase family. In terms of assembly, homotetramer; dimer of dimers. Mg(2+) is required as a cofactor. K(+) serves as cofactor.

Its subcellular location is the cytoplasm. The enzyme catalyses L-methionine + ATP + H2O = S-adenosyl-L-methionine + phosphate + diphosphate. Its pathway is amino-acid biosynthesis; S-adenosyl-L-methionine biosynthesis; S-adenosyl-L-methionine from L-methionine: step 1/1. Functionally, catalyzes the formation of S-adenosylmethionine (AdoMet) from methionine and ATP. The overall synthetic reaction is composed of two sequential steps, AdoMet formation and the subsequent tripolyphosphate hydrolysis which occurs prior to release of AdoMet from the enzyme. In Chlorobium luteolum (strain DSM 273 / BCRC 81028 / 2530) (Pelodictyon luteolum), this protein is S-adenosylmethionine synthase.